Reading from the N-terminus, the 428-residue chain is 3-phosphoshikimate 1-carboxyvinyltransferase (428 aa).

The 3-phosphoshikimate site is built by Lys19, Ser20, and Arg24. Lys19 contributes to the phosphoenolpyruvate binding site. Residues Gly91 and Arg119 each coordinate phosphoenolpyruvate. The 3-phosphoshikimate site is built by Ser164, Gln166, Asp312, and Lys339. Gln166 is a phosphoenolpyruvate binding site. The Proton acceptor role is filled by Asp312. Positions 343 and 386 each coordinate phosphoenolpyruvate.

It belongs to the EPSP synthase family. As to quaternary structure, monomer.

The protein resides in the cytoplasm. The catalysed reaction is 3-phosphoshikimate + phosphoenolpyruvate = 5-O-(1-carboxyvinyl)-3-phosphoshikimate + phosphate. Its pathway is metabolic intermediate biosynthesis; chorismate biosynthesis; chorismate from D-erythrose 4-phosphate and phosphoenolpyruvate: step 6/7. Its function is as follows. Catalyzes the transfer of the enolpyruvyl moiety of phosphoenolpyruvate (PEP) to the 5-hydroxyl of shikimate-3-phosphate (S3P) to produce enolpyruvyl shikimate-3-phosphate and inorganic phosphate. The chain is 3-phosphoshikimate 1-carboxyvinyltransferase from Bacillus licheniformis (strain ATCC 14580 / DSM 13 / JCM 2505 / CCUG 7422 / NBRC 12200 / NCIMB 9375 / NCTC 10341 / NRRL NRS-1264 / Gibson 46).